A 411-amino-acid chain; its full sequence is Putative nickel insertion protein (411 aa).

It belongs to the LarC family.

The chain is Putative nickel insertion protein from Methanothermobacter thermautotrophicus (strain ATCC 29096 / DSM 1053 / JCM 10044 / NBRC 100330 / Delta H) (Methanobacterium thermoautotrophicum).